Here is a 511-residue protein sequence, read N- to C-terminus: MSRQLTHFPRGERLGFSGCSAVLSGGIGSSSASFRARVKGSASFGSKSLSCLGGSRSLALSAAARRGGGRLGGFVGTAFGSAGLGPKCPSVCPPGGIPQVTVNKSLLAPLNVEMDPEIQRVRAQEREQIKALNNKFASFIDKVRFLEQQNQVLETKWNLLQQLDLNNCRKNLEPIYEGYISNLQKQLEMLSGDGVRLDSELRNMQDLVEDYKKRYEVEINRRTAAENEFVVLKKDVDAAYMNKVELQAKVDSLTDEIKFFKCLYEGEITQIQSHISDTSIVLSMDNNRDLDLDSIIAEVRAQYEEIALKSKAEAETLYQTKIQELQVTAGQHGDDLKLTKAEISELNRLIQRIRSEIGNVKKQCADLETAIADAEQRGDCALKDARAKLDELEGALHQAKEELARMLREYQELVSLKLALDMEIATYRKLLESEECRMSGEYPNSVSISVISSTNAGAGGAGFSMGFGASSSYSYKTAAADVKTKGSCGSELKDPLAKTSGSSCATKKASR.

The segment at 1–124 is head; sequence MSRQLTHFPR…DPEIQRVRAQ (124 aa). Residues 125–160 form a coil 1A region; that stretch reads EREQIKALNNKFASFIDKVRFLEQQNQVLETKWNLL. An IF rod domain is found at 125–438; that stretch reads EREQIKALNN…KLLESEECRM (314 aa). Positions 161-179 are linker 1; it reads QQLDLNNCRKNLEPIYEGY. The segment at 180-271 is coil 1B; the sequence is ISNLQKQLEM…CLYEGEITQI (92 aa). The segment at 272–295 is linker 12; the sequence is QSHISDTSIVLSMDNNRDLDLDSI. The segment at 296-434 is coil 2; that stretch reads IAEVRAQYEE…ATYRKLLESE (139 aa). Residues 435-511 form a tail region; the sequence is ECRMSGEYPN…SSCATKKASR (77 aa). The disordered stretch occupies residues 486-511; sequence GSCGSELKDPLAKTSGSSCATKKASR.

The protein belongs to the intermediate filament family. Heterotetramer of two type I and two type II keratins. Highly expressed in hair follicles from scalp and eyebrow. Also expressed in palmoplantar epidermis. Not expressed in face skin despite the presence of fine hairs histologically. In hair, it is specifically present in the inner root sheath (IRS) of the hair follicle. Present in the IRS cuticle, but not in Henle or Huxley layers of the IRS. In the IRS cuticle, its presence is delayed up to the height of the apex of the dermal papilla (at protein level).

Functionally, has a role in hair formation. Specific component of keratin intermediate filaments in the inner root sheath (IRS) of the hair follicle. The protein is Keratin, type II cytoskeletal 72 (KRT72) of Homo sapiens (Human).